The chain runs to 101 residues: Small ribosomal subunit protein bS18c (101 aa).

Basic residues predominate over residues 1–19 (MDKSKRPFRKSKRSFRRRL). The segment at 1–23 (MDKSKRPFRKSKRSFRRRLPPIG) is disordered.

It belongs to the bacterial ribosomal protein bS18 family. As to quaternary structure, part of the 30S ribosomal subunit.

The protein resides in the plastid. It localises to the chloroplast. This Ceratophyllum demersum (Rigid hornwort) protein is Small ribosomal subunit protein bS18c.